A 351-amino-acid polypeptide reads, in one-letter code: Protein-glutamate methylesterase/protein-glutamine glutaminase 2 (351 aa).

The Response regulatory domain maps to 4–121 (KVLVVDDSTL…PQGFNEYQDL (118 aa)). Asp-55 is subject to 4-aspartylphosphate. The region spanning 156 to 348 (RTVNTQLVAI…DKLLQYLASV (193 aa)) is the CheB-type methylesterase domain. Catalysis depends on residues Ser-168, His-194, and Asp-290.

Belongs to the CheB family. Phosphorylated by CheA. Phosphorylation of the N-terminal regulatory domain activates the methylesterase activity.

It is found in the cytoplasm. It catalyses the reaction [protein]-L-glutamate 5-O-methyl ester + H2O = L-glutamyl-[protein] + methanol + H(+). It carries out the reaction L-glutaminyl-[protein] + H2O = L-glutamyl-[protein] + NH4(+). Functionally, involved in chemotaxis. Part of a chemotaxis signal transduction system that modulates chemotaxis in response to various stimuli. Catalyzes the demethylation of specific methylglutamate residues introduced into the chemoreceptors (methyl-accepting chemotaxis proteins or MCP) by CheR. Also mediates the irreversible deamidation of specific glutamine residues to glutamic acid. This is Protein-glutamate methylesterase/protein-glutamine glutaminase 2 from Shewanella oneidensis (strain ATCC 700550 / JCM 31522 / CIP 106686 / LMG 19005 / NCIMB 14063 / MR-1).